The chain runs to 381 residues: Cytochrome b (381 aa).

4 consecutive transmembrane segments (helical) span residues 34–54 (FGSL…FLAM), 78–99 (WLIR…YLHI), 114–134 (WNIG…GYVL), and 179–199 (FFAF…IHLL). Heme b-binding residues include H84 and H98. Heme b is bound by residues H183 and H197. H202 serves as a coordination point for a ubiquinone. The next 4 membrane-spanning stretches (helical) occupy residues 227 to 247 (YKDL…ALFL), 289 to 309 (LGGV…PMLH), 321 to 341 (MTQF…WIGG), and 348 to 368 (FILV…IIIP).

It belongs to the cytochrome b family. In terms of assembly, the cytochrome bc1 complex contains 3 respiratory subunits (MT-CYB, CYC1 and UQCRFS1), 2 core proteins (UQCRC1 and UQCRC2) and probably 6 low-molecular weight proteins. Heme b is required as a cofactor.

The protein resides in the mitochondrion inner membrane. In terms of biological role, component of the ubiquinol-cytochrome c reductase complex (complex III or cytochrome b-c1 complex) that is part of the mitochondrial respiratory chain. The b-c1 complex mediates electron transfer from ubiquinol to cytochrome c. Contributes to the generation of a proton gradient across the mitochondrial membrane that is then used for ATP synthesis. In Squalus acanthias (Spiny dogfish), this protein is Cytochrome b (mt-cyb).